We begin with the raw amino-acid sequence, 429 residues long: Glutamate-1-semialdehyde 2,1-aminomutase (429 aa).

N6-(pyridoxal phosphate)lysine is present on lysine 267.

Belongs to the class-III pyridoxal-phosphate-dependent aminotransferase family. HemL subfamily. As to quaternary structure, homodimer. Pyridoxal 5'-phosphate is required as a cofactor.

The protein resides in the cytoplasm. The catalysed reaction is (S)-4-amino-5-oxopentanoate = 5-aminolevulinate. It functions in the pathway porphyrin-containing compound metabolism; protoporphyrin-IX biosynthesis; 5-aminolevulinate from L-glutamyl-tRNA(Glu): step 2/2. The chain is Glutamate-1-semialdehyde 2,1-aminomutase from Xanthomonas oryzae pv. oryzae (strain MAFF 311018).